A 275-amino-acid chain; its full sequence is Shikimate dehydrogenase (NADP(+)) (275 aa).

Shikimate is bound by residues 15-17 (SKS) and Thr-62. The active-site Proton acceptor is the Lys-66. Position 78 (Glu-78) interacts with NADP(+). Shikimate is bound by residues Asn-87 and Asp-102. NADP(+) is bound by residues 128–132 (GAGGA), 151–156 (NRTAEK), and Leu-218. Tyr-220 contacts shikimate. An NADP(+)-binding site is contributed by Gly-241.

This sequence belongs to the shikimate dehydrogenase family. Homodimer.

It catalyses the reaction shikimate + NADP(+) = 3-dehydroshikimate + NADPH + H(+). The protein operates within metabolic intermediate biosynthesis; chorismate biosynthesis; chorismate from D-erythrose 4-phosphate and phosphoenolpyruvate: step 4/7. Involved in the biosynthesis of the chorismate, which leads to the biosynthesis of aromatic amino acids. Catalyzes the reversible NADPH linked reduction of 3-dehydroshikimate (DHSA) to yield shikimate (SA). The protein is Shikimate dehydrogenase (NADP(+)) of Shouchella clausii (strain KSM-K16) (Alkalihalobacillus clausii).